Here is a 318-residue protein sequence, read N- to C-terminus: Extracellular metalloprotease AO090012001025 (318 aa).

Positions 1–23 (MSHFPTLHILILVIANLQIQCFA) are cleaved as a signal peptide. Asn-106, Asn-121, and Asn-193 each carry an N-linked (GlcNAc...) asparagine glycan. His-229 is a binding site for Zn(2+). Glu-230 is a catalytic residue. His-233 contributes to the Zn(2+) binding site. Cysteines 268 and 295 form a disulfide.

This sequence belongs to the peptidase M43B family.

It is found in the secreted. In terms of biological role, secreted metalloproteinase that allows assimilation of proteinaceous substrates. The sequence is that of Extracellular metalloprotease AO090012001025 from Aspergillus oryzae (strain ATCC 42149 / RIB 40) (Yellow koji mold).